The primary structure comprises 170 residues: UPF0316 protein CLK_3798 (170 aa).

Helical transmembrane passes span M1 to I21 and I36 to I56.

It belongs to the UPF0316 family.

It localises to the cell membrane. The sequence is that of UPF0316 protein CLK_3798 from Clostridium botulinum (strain Loch Maree / Type A3).